Reading from the N-terminus, the 70-residue chain is Putative membrane protein insertion efficiency factor (70 aa).

The protein belongs to the UPF0161 family.

The protein resides in the cell membrane. Could be involved in insertion of integral membrane proteins into the membrane. The sequence is that of Putative membrane protein insertion efficiency factor from Symbiobacterium thermophilum (strain DSM 24528 / JCM 14929 / IAM 14863 / T).